A 421-amino-acid polypeptide reads, in one-letter code: Alpha-1-antitrypsin (421 aa).

The N-terminal stretch at 1 to 24 (MASSSTWGLLLLAGLCCLVPISLA) is a signal peptide. N-linked (GlcNAc...) asparagine glycosylation is found at N73 and N110. The segment at 376-395 (GATILEAIPMSIPPNVKFNK) is RCL. Phosphoserine is present on S386.

Belongs to the serpin family. Interacts with CELA2A. Interacts with ERGIC3 and LMAN1/ERGIC53. Interacts with PRSS1/Trypsin.

Its subcellular location is the secreted. Its function is as follows. Inhibitor of serine proteases. Its primary target is elastase, but it also has a moderate affinity for plasmin and thrombin. The protein is Alpha-1-antitrypsin (SERPINA1) of Sus scrofa (Pig).